The primary structure comprises 326 residues: DNA-directed RNA polymerase subunit alpha (326 aa).

Positions Met-1 to Glu-231 are alpha N-terminal domain (alpha-NTD). The alpha C-terminal domain (alpha-CTD) stretch occupies residues Ile-245 to Gly-326.

It belongs to the RNA polymerase alpha chain family. In terms of assembly, homodimer. The RNAP catalytic core consists of 2 alpha, 1 beta, 1 beta' and 1 omega subunit. When a sigma factor is associated with the core the holoenzyme is formed, which can initiate transcription.

It catalyses the reaction RNA(n) + a ribonucleoside 5'-triphosphate = RNA(n+1) + diphosphate. Its function is as follows. DNA-dependent RNA polymerase catalyzes the transcription of DNA into RNA using the four ribonucleoside triphosphates as substrates. The sequence is that of DNA-directed RNA polymerase subunit alpha from Aromatoleum aromaticum (strain DSM 19018 / LMG 30748 / EbN1) (Azoarcus sp. (strain EbN1)).